The sequence spans 203 residues: Thymidylate kinase (203 aa).

14–21 is an ATP binding site; sequence GGEGSGKS.

Belongs to the thymidylate kinase family.

It catalyses the reaction dTMP + ATP = dTDP + ADP. Functionally, phosphorylation of dTMP to form dTDP in both de novo and salvage pathways of dTTP synthesis. The polypeptide is Thymidylate kinase (Rickettsia canadensis (strain McKiel)).